The sequence spans 536 residues: Phosphoenolpyruvate carboxykinase (ATP) (536 aa).

Positions 61, 195, and 201 each coordinate substrate. ATP is bound by residues lysine 201, histidine 220, and 236 to 244; that span reads GLSGTGKTT. Residues lysine 201 and histidine 220 each contribute to the Mn(2+) site. Aspartate 257 is a binding site for Mn(2+). Positions 285, 322, and 447 each coordinate ATP. Residue arginine 322 participates in substrate binding.

The protein belongs to the phosphoenolpyruvate carboxykinase (ATP) family. Requires Mn(2+) as cofactor.

Its subcellular location is the cytoplasm. It catalyses the reaction oxaloacetate + ATP = phosphoenolpyruvate + ADP + CO2. Its pathway is carbohydrate biosynthesis; gluconeogenesis. Its function is as follows. Involved in the gluconeogenesis. Catalyzes the conversion of oxaloacetate (OAA) to phosphoenolpyruvate (PEP) through direct phosphoryl transfer between the nucleoside triphosphate and OAA. The chain is Phosphoenolpyruvate carboxykinase (ATP) from Rhizobium leguminosarum bv. trifolii (strain WSM2304).